A 429-amino-acid chain; its full sequence is Adenylosuccinate synthetase (429 aa).

Residues 15 to 21 and 43 to 45 each bind GTP; these read GDEGKGK and GHV. Asp-16 serves as the catalytic Proton acceptor. Mg(2+)-binding residues include Asp-16 and Gly-43. IMP is bound by residues 16-19, 41-44, Thr-131, Arg-145, Gln-225, Thr-240, and Arg-304; these read DEGK and NAGH. The Proton donor role is filled by His-44. 300–306 contributes to the substrate binding site; sequence SNTKRPR. Residues Arg-306, 332-334, and 414-416 each bind GTP; these read LLD and SVG.

Belongs to the adenylosuccinate synthetase family. As to quaternary structure, homodimer. The cofactor is Mg(2+).

It is found in the cytoplasm. The enzyme catalyses IMP + L-aspartate + GTP = N(6)-(1,2-dicarboxyethyl)-AMP + GDP + phosphate + 2 H(+). Its pathway is purine metabolism; AMP biosynthesis via de novo pathway; AMP from IMP: step 1/2. Functionally, plays an important role in the de novo pathway of purine nucleotide biosynthesis. Catalyzes the first committed step in the biosynthesis of AMP from IMP. In Mesoplasma florum (strain ATCC 33453 / NBRC 100688 / NCTC 11704 / L1) (Acholeplasma florum), this protein is Adenylosuccinate synthetase.